We begin with the raw amino-acid sequence, 426 residues long: Histidine--tRNA ligase (426 aa).

This sequence belongs to the class-II aminoacyl-tRNA synthetase family. Homodimer.

The protein localises to the cytoplasm. The enzyme catalyses tRNA(His) + L-histidine + ATP = L-histidyl-tRNA(His) + AMP + diphosphate + H(+). The polypeptide is Histidine--tRNA ligase (Streptococcus equi subsp. zooepidemicus (strain H70)).